Reading from the N-terminus, the 321-residue chain is GDP-L-fucose synthase (321 aa).

NADP(+)-binding positions include 10 to 16, 36 to 41, and 105 to 108; these read GHRGMVG, RDELNL, and LGSS. Y136 (proton donor/acceptor) is an active-site residue. Residues K140, 163 to 166, and H179 contribute to the NADP(+) site; that span reads PTNL. Residues R187, W202, R209, and D278 each coordinate substrate.

This sequence belongs to the NAD(P)-dependent epimerase/dehydratase family. Fucose synthase subfamily. Homodimer.

Its subcellular location is the cytoplasm. It catalyses the reaction GDP-beta-L-fucose + NADP(+) = GDP-4-dehydro-alpha-D-rhamnose + NADPH + H(+). It participates in nucleotide-sugar biosynthesis; GDP-L-fucose biosynthesis via de novo pathway; GDP-L-fucose from GDP-alpha-D-mannose: step 2/2. Its pathway is exopolysaccharide biosynthesis; colanic acid biosynthesis. Subject to product inhibition by NADP and GDP-fucose. In terms of biological role, catalyzes the two-step NADP-dependent conversion of GDP-4-dehydro-6-deoxy-D-mannose to GDP-fucose, involving an epimerase and a reductase reaction. This Escherichia coli (strain K12) protein is GDP-L-fucose synthase.